The chain runs to 151 residues: CD-NTase-associated protein 19 (151 aa).

The next 3 helical transmembrane spans lie at 25 to 45 (TVFN…GVTL), 52 to 72 (VLFT…FWKL), and 127 to 147 (ISFV…FLMK).

Belongs to the Cap19 family.

The protein localises to the cell inner membrane. Its function is as follows. Membrane protein component of a CBASS (cyclic oligonucleotide-based antiphage signaling system) which provides immunity against bacteriophage. The CD-NTase protein synthesizes cyclic nucleotides in response to infection; these serve as specific second messenger signals. The signals activate a diverse range of effectors, leading to bacterial cell death and thus abortive phage infection. A type III CBASS system. Expression of this CBASS system (Cap17-CapW-CdnC-Cap7-Cap6-Cap18-Cap19) in a susceptible E.coli (strain JP313) confers resistance to bacteriophage lambda cI-. The chain is CD-NTase-associated protein 19 from Escherichia coli.